Reading from the N-terminus, the 909-residue chain is Golgin subfamily A member 6-like protein 2 (909 aa).

A compositionally biased stretch (pro residues) spans 1–11 (MWPQPHLPPHP). 5 disordered regions span residues 1–88 (MWPQ…ASHQ), 300–362 (ERLR…EQEE), 381–408 (QEKQ…RLRE), 425–494 (KMRE…QRLP), and 524–909 (EEMW…QSSL). Positions 13 to 31 (MSEKTRQNKLAEAKKKFTD) are enriched in basic and acidic residues. The span at 53–77 (NNGTNPETTTSEGCHSPEDTQQNRA) shows a compositional bias: polar residues. Positions 78–88 (QLKEEKKASHQ) are enriched in basic and acidic residues. Positions 192–526 (HKKADRYIEE…EEKIRDQEEM (335 aa)) form a coiled coil. Composition is skewed to basic and acidic residues over residues 425 to 478 (KMRE…KQEE) and 524 to 542 (EEMW…MREQ). A compositionally biased stretch (acidic residues) spans 607–620 (AGGEEDAGAGEEDM). Composition is skewed to gly residues over residues 641 to 654 (GGGG…GEDA) and 676 to 689 (GAGG…GEDV). Residues 692-719 (GRRRCGSSRGCRNRRRSCGNTRRCRSRR) show a composition bias toward basic residues. Positions 746-755 (AGAEDVAAGG) are enriched in low complexity. Positions 757–766 (DAGEEEDAGG) are enriched in acidic residues. Over residues 791 to 871 (GAGGEDVGAG…AGGEDVGAGG (81 aa)) the composition is skewed to gly residues. Positions 872–892 (DAREGGEDTRSEREDAGEAAR) are enriched in basic and acidic residues.

The protein belongs to the GOLGA6 family.

The polypeptide is Golgin subfamily A member 6-like protein 2 (GOLGA6L2) (Homo sapiens (Human)).